Reading from the N-terminus, the 348-residue chain is Phosphoribosylformylglycinamidine cyclo-ligase (348 aa).

The protein belongs to the AIR synthase family.

It localises to the cytoplasm. It catalyses the reaction 2-formamido-N(1)-(5-O-phospho-beta-D-ribosyl)acetamidine + ATP = 5-amino-1-(5-phospho-beta-D-ribosyl)imidazole + ADP + phosphate + H(+). The protein operates within purine metabolism; IMP biosynthesis via de novo pathway; 5-amino-1-(5-phospho-D-ribosyl)imidazole from N(2)-formyl-N(1)-(5-phospho-D-ribosyl)glycinamide: step 2/2. The sequence is that of Phosphoribosylformylglycinamidine cyclo-ligase from Roseobacter denitrificans (strain ATCC 33942 / OCh 114) (Erythrobacter sp. (strain OCh 114)).